Here is a 348-residue protein sequence, read N- to C-terminus: Calcium-gated potassium channel TvoK (348 aa).

A run of 3 helical transmembrane segments spans residues 19–39, 52–72, and 80–100; these read LTKVFMAFIIVVLIGSYLEFL, YFTAIWFTMETVTTVGYGDVV, and VVAMLIMVSGIGLLGTLTATI. The 127-residue stretch at 120 to 246 folds into the RCK N-terminal domain; it reads KNHTIICNWN…VSAGATEVLS (127 aa). An RCK C-terminal domain is found at 266-348; the sequence is DFILKSLSET…KKEVEEAIKG (83 aa).

As to quaternary structure, heterooctamer composed of four full-length subunits and four soluble RCK domains.

The protein localises to the cell membrane. Its function is as follows. Calcium-gated potassium channel. Can also be activated by Mg(2+), Mn(2+) and Ni(2+). The protein is Calcium-gated potassium channel TvoK of Thermoplasma volcanium (strain ATCC 51530 / DSM 4299 / JCM 9571 / NBRC 15438 / GSS1).